The primary structure comprises 451 residues: UDP-N-acetylmuramoylalanine--D-glutamate ligase (451 aa).

Residue 119–125 (GSNGKTT) coordinates ATP.

Belongs to the MurCDEF family.

Its subcellular location is the cytoplasm. It carries out the reaction UDP-N-acetyl-alpha-D-muramoyl-L-alanine + D-glutamate + ATP = UDP-N-acetyl-alpha-D-muramoyl-L-alanyl-D-glutamate + ADP + phosphate + H(+). It participates in cell wall biogenesis; peptidoglycan biosynthesis. Cell wall formation. Catalyzes the addition of glutamate to the nucleotide precursor UDP-N-acetylmuramoyl-L-alanine (UMA). In Bacillus cytotoxicus (strain DSM 22905 / CIP 110041 / 391-98 / NVH 391-98), this protein is UDP-N-acetylmuramoylalanine--D-glutamate ligase.